Reading from the N-terminus, the 549-residue chain is T-complex protein 1 subunit theta (549 aa).

It belongs to the TCP-1 chaperonin family. In terms of assembly, heterooligomeric complex of about 850 to 900 kDa that forms two stacked rings, 12 to 16 nm in diameter. Interacts with CCT3, KNAT1, STM and TTG1. As to expression, expressed in shoot meristems, root tip, vasculature and leaf epidermis.

Its subcellular location is the cytoplasm. In terms of biological role, molecular chaperone; assists the folding of proteins upon ATP hydrolysis. Known to play a role, in vitro, in the folding of actin and tubulin. Contributes to stem cell maintenance through its impact on transcription factors trafficking through plasmodesmata. Probably involved in refolding translocated, partially unfolded proteins, including viral movement proteins. The polypeptide is T-complex protein 1 subunit theta (Arabidopsis thaliana (Mouse-ear cress)).